A 214-amino-acid polypeptide reads, in one-letter code: MQAGGRRQRRLGVMGGTFDPIHNGHLVAASEVADRFDLDEVVFVPTGQPWQKRARAVTAAEDRYLMTVIATASNPRFTVSRVDIDRGGATYTKDTLRDLRAQNPDADLFFITGADALASILSWQNWEEMFSIARFIGVSRPGYELDGKHISAAMAELPDDALHLIEVPALAISSTDCRIRAEQSRPIWYLVPDGVVQYVAKRNLYRSEGEGVRP.

Belongs to the NadD family.

It catalyses the reaction nicotinate beta-D-ribonucleotide + ATP + H(+) = deamido-NAD(+) + diphosphate. The protein operates within cofactor biosynthesis; NAD(+) biosynthesis; deamido-NAD(+) from nicotinate D-ribonucleotide: step 1/1. In terms of biological role, catalyzes the reversible adenylation of nicotinate mononucleotide (NaMN) to nicotinic acid adenine dinucleotide (NaAD). The protein is Probable nicotinate-nucleotide adenylyltransferase of Mycolicibacterium vanbaalenii (strain DSM 7251 / JCM 13017 / BCRC 16820 / KCTC 9966 / NRRL B-24157 / PYR-1) (Mycobacterium vanbaalenii).